Here is a 150-residue protein sequence, read N- to C-terminus: Large ribosomal subunit protein bL9 (150 aa).

This sequence belongs to the bacterial ribosomal protein bL9 family.

Binds to the 23S rRNA. This Renibacterium salmoninarum (strain ATCC 33209 / DSM 20767 / JCM 11484 / NBRC 15589 / NCIMB 2235) protein is Large ribosomal subunit protein bL9.